The sequence spans 105 residues: Pyrimidine/purine nucleoside phosphorylase (105 aa).

It belongs to the nucleoside phosphorylase PpnP family.

The catalysed reaction is a purine D-ribonucleoside + phosphate = a purine nucleobase + alpha-D-ribose 1-phosphate. It catalyses the reaction adenosine + phosphate = alpha-D-ribose 1-phosphate + adenine. The enzyme catalyses cytidine + phosphate = cytosine + alpha-D-ribose 1-phosphate. It carries out the reaction guanosine + phosphate = alpha-D-ribose 1-phosphate + guanine. The catalysed reaction is inosine + phosphate = alpha-D-ribose 1-phosphate + hypoxanthine. It catalyses the reaction thymidine + phosphate = 2-deoxy-alpha-D-ribose 1-phosphate + thymine. The enzyme catalyses uridine + phosphate = alpha-D-ribose 1-phosphate + uracil. It carries out the reaction xanthosine + phosphate = alpha-D-ribose 1-phosphate + xanthine. Its function is as follows. Catalyzes the phosphorolysis of diverse nucleosides, yielding D-ribose 1-phosphate and the respective free bases. Can use uridine, adenosine, guanosine, cytidine, thymidine, inosine and xanthosine as substrates. Also catalyzes the reverse reactions. This chain is Pyrimidine/purine nucleoside phosphorylase, found in Anaeromyxobacter sp. (strain Fw109-5).